Consider the following 183-residue polypeptide: Lipid droplet coating protein Cap20 (183 aa).

The protein belongs to the perilipin family.

Its subcellular location is the lipid droplet. Its function is as follows. Lipid droplet coating protein that regulates lipid metabolism, appressorial turgor pressure, and virulence. Appressorial turgor pressure is important for the mechanical penetration of the host cuticle during infection. The sequence is that of Lipid droplet coating protein Cap20 (Cap20) from Colletotrichum gloeosporioides (Anthracnose fungus).